The primary structure comprises 166 residues: Orotate phosphoribosyltransferase (166 aa).

5-phospho-alpha-D-ribose 1-diphosphate contacts are provided by residues arginine 83, lysine 84, histidine 89, and 109–117; that span reads DDVATTGGS. Orotate contacts are provided by threonine 113 and arginine 141.

Belongs to the purine/pyrimidine phosphoribosyltransferase family. PyrE subfamily. In terms of assembly, homodimer. Requires Mg(2+) as cofactor.

The catalysed reaction is orotidine 5'-phosphate + diphosphate = orotate + 5-phospho-alpha-D-ribose 1-diphosphate. It functions in the pathway pyrimidine metabolism; UMP biosynthesis via de novo pathway; UMP from orotate: step 1/2. Its function is as follows. Catalyzes the transfer of a ribosyl phosphate group from 5-phosphoribose 1-diphosphate to orotate, leading to the formation of orotidine monophosphate (OMP). This Picrophilus torridus (strain ATCC 700027 / DSM 9790 / JCM 10055 / NBRC 100828 / KAW 2/3) protein is Orotate phosphoribosyltransferase.